The following is a 397-amino-acid chain: MLFIRQLSVIPKAPAFAKFFHTAGLVRQKLSDPNHLAILLQKNLAQRNSSLYNPELETIRCTIFDRHGNMQKPSIDLRRDELIHTHGLLPRDLRKVEKSRRNDLVPSVLVRENSILVSILNIRALVKSDMLILFDSMGIKLDSVSQQNFIADLQLRLQNRSGFEVPDVVNKDPLPYEFRAVESIFISAISNLNAELKVHLNVSTGILQDLEYSITRDKLRYLLIQNKKLSVFHKKSFLMREMIEELLEQDDVLCEMYLTEKQLGKPREEHDHAEIEMLLETYYNHVDEIVQTVGNTMSNIKTTEEIINIILDSNRNQLMLLGLRFSIGLLSLAGSIFIASIYGMNLENFIEEGNVGFPVVSTLGVILMAYLFAFSVKHLHKLEKVQLMSHGKSSTLK.

A mitochondrion-targeting transit peptide spans 1 to 48 (MLFIRQLSVIPKAPAFAKFFHTAGLVRQKLSDPNHLAILLQKNLAQRN). The chain crosses the membrane as a helical span at residues 318-338 (LMLLGLRFSIGLLSLAGSIFI). Positions 342 to 345 (YGMN) match the YGMN motif. Residues 355–375 (VGFPVVSTLGVILMAYLFAFS) traverse the membrane as a helical segment.

It belongs to the CorA metal ion transporter (MIT) (TC 1.A.35) family. As to quaternary structure, forms homooligomers. Interacts with MRS2.

The protein localises to the mitochondrion inner membrane. Its function is as follows. Mitochondrial inner membrane magnesium transporter required for mitochondrial magnesium homeostasis. Modulates the conductance of the MRS2 channel. Involved in the splicing of mRNA group II introns in mitochondria by affecting mitochondrial magnesium concentrations, which are critical for group II intron splicing. The polypeptide is Mitochondrial inner membrane magnesium transporter LPE10 (LPE10) (Kluyveromyces lactis (strain ATCC 8585 / CBS 2359 / DSM 70799 / NBRC 1267 / NRRL Y-1140 / WM37) (Yeast)).